A 660-amino-acid polypeptide reads, in one-letter code: Bifunctional polymyxin resistance protein ArnA (660 aa).

Residues Met-1 to Leu-304 are formyltransferase ArnAFT. Residue His-86 to Ile-88 participates in (6R)-10-formyltetrahydrofolate binding. Residue His-104 is the Proton donor; for formyltransferase activity of the active site. Residues Arg-114 and Val-136–Asp-140 each bind (6R)-10-formyltetrahydrofolate. A dehydrogenase ArnADH region spans residues Arg-314–Ser-660. Residues Asp-347 and Asp-368–Ile-369 contribute to the NAD(+) site. UDP-alpha-D-glucuronate-binding positions include Ala-393, Tyr-398, and Thr-432 to Ser-433. The active-site Proton acceptor; for decarboxylase activity is Glu-434. UDP-alpha-D-glucuronate-binding positions include Arg-460, Asn-492, Lys-526 to Arg-535, and Tyr-613. Arg-619 (proton donor; for decarboxylase activity) is an active-site residue.

In the N-terminal section; belongs to the Fmt family. UDP-L-Ara4N formyltransferase subfamily. This sequence in the C-terminal section; belongs to the NAD(P)-dependent epimerase/dehydratase family. UDP-glucuronic acid decarboxylase subfamily. As to quaternary structure, homohexamer, formed by a dimer of trimers.

The catalysed reaction is UDP-alpha-D-glucuronate + NAD(+) = UDP-beta-L-threo-pentopyranos-4-ulose + CO2 + NADH. It catalyses the reaction UDP-4-amino-4-deoxy-beta-L-arabinose + (6R)-10-formyltetrahydrofolate = UDP-4-deoxy-4-formamido-beta-L-arabinose + (6S)-5,6,7,8-tetrahydrofolate + H(+). It functions in the pathway nucleotide-sugar biosynthesis; UDP-4-deoxy-4-formamido-beta-L-arabinose biosynthesis; UDP-4-deoxy-4-formamido-beta-L-arabinose from UDP-alpha-D-glucuronate: step 1/3. The protein operates within nucleotide-sugar biosynthesis; UDP-4-deoxy-4-formamido-beta-L-arabinose biosynthesis; UDP-4-deoxy-4-formamido-beta-L-arabinose from UDP-alpha-D-glucuronate: step 3/3. It participates in bacterial outer membrane biogenesis; lipopolysaccharide biosynthesis. Its function is as follows. Bifunctional enzyme that catalyzes the oxidative decarboxylation of UDP-glucuronic acid (UDP-GlcUA) to UDP-4-keto-arabinose (UDP-Ara4O) and the addition of a formyl group to UDP-4-amino-4-deoxy-L-arabinose (UDP-L-Ara4N) to form UDP-L-4-formamido-arabinose (UDP-L-Ara4FN). The modified arabinose is attached to lipid A and is required for resistance to polymyxin and cationic antimicrobial peptides. This Shigella boydii serotype 4 (strain Sb227) protein is Bifunctional polymyxin resistance protein ArnA.